We begin with the raw amino-acid sequence, 1434 residues long: Probable ATP-dependent RNA helicase spindle-E (1434 aa).

In terms of domain architecture, Helicase ATP-binding spans 125–292; that stretch reads LAAINAHPVV…FTTTNSIPPV (168 aa). Residue 138–145 coordinates ATP; that stretch reads GETGCGKT. Residues 238–241 carry the DEAH box motif; it reads DEVH. One can recognise a Helicase C-terminal domain in the interval 354 to 526; it reads QSRQSYDEAL…NSVLKAKVLN (173 aa). One can recognise a Tudor domain in the interval 938-1001; it reads ASAIAKGMMV…RLMPRELTEQ (64 aa).

Belongs to the DEAD box helicase family. DEAH subfamily.

The protein resides in the cytoplasm. The protein localises to the perinuclear region. It localises to the cytoplasmic ribonucleoprotein granule. It carries out the reaction ATP + H2O = ADP + phosphate + H(+). Functionally, probable ATP-binding RNA helicase which plays a central role during spermatogenesis and oogenesis by repressing transposable elements and preventing their mobilization, which is essential for the germline integrity. Acts via the piRNA metabolic process, which mediates the repression of transposable elements during meiosis by forming complexes composed of piRNAs and Piwi and govern the methylation and subsequent repression of transposons. Involved in the repression of LTR retrotransposon copia. Also involved in telomere regulation by repressing specialized telomeric retroelements HeT-A, TAHRE, and TART; Drosophila telomeres being maintained by transposition of specialized telomeric retroelements. Involved in telomeric trans-silencing, a repression mechanism by which a transposon or a transgene inserted in subtelomeric heterochromatin has the capacity to repress in trans in the female germline, a homologous transposon, or transgene located in euchromatin. Involved in the repression of testis-expressed Stellate genes by the homologous Su(Ste) repeats. Required for anteroposterior and dorsoventral axis formation during oogenesis. Key component of the perinuclear meiotic nuage, an electron dense structure involved in the post-transcriptional regulation of transposons and mRNAs; required for recruitment of other nuage comonents including vas, krimp, aub and mael. May have a role in production of piwi-interacting RNA (piRNA). The sequence is that of Probable ATP-dependent RNA helicase spindle-E from Drosophila melanogaster (Fruit fly).